We begin with the raw amino-acid sequence, 240 residues long: Zein-alpha 19C2 (240 aa).

A signal peptide spans M1 to A21.

Belongs to the zein family. In terms of assembly, interacts with OP10 (via N-terminus).

In terms of biological role, zeins are major seed storage proteins. The sequence is that of Zein-alpha 19C2 from Zea mays (Maize).